A 275-amino-acid polypeptide reads, in one-letter code: Large ribosomal subunit protein uL2 (275 aa).

Disordered stretches follow at residues 24 to 54 (LYKG…VRHQ) and 223 to 275 (VAMN…RHKR). Basic and acidic residues-rich tracts occupy residues 25–38 (YKGR…EKKT) and 229–241 (DHPH…RTGE).

Belongs to the universal ribosomal protein uL2 family. In terms of assembly, part of the 50S ribosomal subunit. Forms a bridge to the 30S subunit in the 70S ribosome.

One of the primary rRNA binding proteins. Required for association of the 30S and 50S subunits to form the 70S ribosome, for tRNA binding and peptide bond formation. It has been suggested to have peptidyltransferase activity; this is somewhat controversial. Makes several contacts with the 16S rRNA in the 70S ribosome. The polypeptide is Large ribosomal subunit protein uL2 (Azoarcus sp. (strain BH72)).